An 839-amino-acid polypeptide reads, in one-letter code: Eukaryotic translation initiation factor 3 subunit C (839 aa).

Positions 1–93 are disordered; sequence MSRFFVAGYN…DSDSEDEGRR (93 aa). 2 stretches are compositionally biased toward acidic residues: residues 14–27 and 34–58; these read SSEEEDLLSSDEEL and GEQETSDDDSLDFDDQSDSDSSDSD. Residues 585 to 759 enclose the PCI domain; sequence FHQHINLELL…AFIQFASTEP (175 aa). A disordered region spans residues 783–839; sequence EKTSSNGYGKKQPQQQQQQQQQQQQQQQQQKDLLQEDNSRFRYANVNTNNDEFQTTA. Low complexity predominate over residues 794 to 812; that stretch reads QPQQQQQQQQQQQQQQQQQ. Polar residues predominate over residues 827–839; sequence NVNTNNDEFQTTA.

It belongs to the eIF-3 subunit C family. Component of the eukaryotic translation initiation factor 3 (eIF-3) complex.

Its subcellular location is the cytoplasm. Its function is as follows. Component of the eukaryotic translation initiation factor 3 (eIF-3) complex, which is involved in protein synthesis of a specialized repertoire of mRNAs and, together with other initiation factors, stimulates binding of mRNA and methionyl-tRNAi to the 40S ribosome. The eIF-3 complex specifically targets and initiates translation of a subset of mRNAs involved in cell proliferation. This is Eukaryotic translation initiation factor 3 subunit C from Scheffersomyces stipitis (strain ATCC 58785 / CBS 6054 / NBRC 10063 / NRRL Y-11545) (Yeast).